We begin with the raw amino-acid sequence, 445 residues long: Trigger factor (445 aa).

The PPIase FKBP-type domain occupies 163–248 (GDTVVIDYVG…IHEVKVKELP (86 aa)). The segment at 425 to 445 (KEVESAKDDADKEASDAKADK) is disordered.

The protein belongs to the FKBP-type PPIase family. Tig subfamily.

Its subcellular location is the cytoplasm. The enzyme catalyses [protein]-peptidylproline (omega=180) = [protein]-peptidylproline (omega=0). Involved in protein export. Acts as a chaperone by maintaining the newly synthesized protein in an open conformation. Functions as a peptidyl-prolyl cis-trans isomerase. The protein is Trigger factor of Lacticaseibacillus casei (strain BL23) (Lactobacillus casei).